We begin with the raw amino-acid sequence, 398 residues long: Proteasome-activating nucleotidase (398 aa).

The stretch at I18–P59 forms a coiled coil. ATP contacts are provided by residues G183 to L188 and H322. A docks into pockets in the proteasome alpha-ring to cause gate opening region spans residues M396–G398.

It belongs to the AAA ATPase family. In terms of assembly, homohexamer. The hexameric complex has a two-ring architecture resembling a top hat that caps the 20S proteasome core at one or both ends. Upon ATP-binding, the C-terminus of PAN interacts with the alpha-rings of the proteasome core by binding to the intersubunit pockets.

It is found in the cytoplasm. ATPase which is responsible for recognizing, binding, unfolding and translocation of substrate proteins into the archaeal 20S proteasome core particle. Is essential for opening the gate of the 20S proteasome via an interaction with its C-terminus, thereby allowing substrate entry and access to the site of proteolysis. Thus, the C-termini of the proteasomal ATPase function like a 'key in a lock' to induce gate opening and therefore regulate proteolysis. Unfolding activity requires energy from ATP hydrolysis, whereas ATP binding alone promotes ATPase-20S proteasome association which triggers gate opening, and supports translocation of unfolded substrates. This Thermococcus onnurineus (strain NA1) protein is Proteasome-activating nucleotidase.